Here is a 232-residue protein sequence, read N- to C-terminus: Large ribosomal subunit protein uL1 (232 aa).

The protein belongs to the universal ribosomal protein uL1 family. Part of the 50S ribosomal subunit.

In terms of biological role, binds directly to 23S rRNA. The L1 stalk is quite mobile in the ribosome, and is involved in E site tRNA release. Protein L1 is also a translational repressor protein, it controls the translation of the L11 operon by binding to its mRNA. This is Large ribosomal subunit protein uL1 from Hahella chejuensis (strain KCTC 2396).